Here is a 252-residue protein sequence, read N- to C-terminus: Large ribosomal subunit protein uL29m (252 aa).

K146 carries the N6-acetyllysine modification. The span at 230–240 (KKKEKILHAKF) shows a compositional bias: basic residues. The interval 230 to 252 (KKKEKILHAKFPHLSQERKSSSV) is disordered.

The protein belongs to the universal ribosomal protein uL29 family. In terms of assembly, component of the mitochondrial ribosome large subunit (39S) which comprises a 16S rRNA and about 50 distinct proteins.

The protein resides in the mitochondrion. This Mus musculus (Mouse) protein is Large ribosomal subunit protein uL29m (Mrpl47).